Reading from the N-terminus, the 107-residue chain is U1-lycotoxin-Ls1h (107 aa).

Positions 1 to 20 are cleaved as a signal peptide; it reads MMKVLVVVALLVTLISYSSS. Positions 21–41 are excised as a propeptide; the sequence is EGIDDLEADELLSLMANEQTR. Cystine bridges form between C44–C59, C51–C68, and C70–C84.

This sequence belongs to the neurotoxin 19 (CSTX) family. 04 (U1-Lctx) subfamily. In terms of tissue distribution, expressed by the venom gland.

Its subcellular location is the secreted. This is U1-lycotoxin-Ls1h from Lycosa singoriensis (Wolf spider).